We begin with the raw amino-acid sequence, 440 residues long: Thymidine phosphorylase (440 aa).

It belongs to the thymidine/pyrimidine-nucleoside phosphorylase family. As to quaternary structure, homodimer.

It catalyses the reaction thymidine + phosphate = 2-deoxy-alpha-D-ribose 1-phosphate + thymine. Its pathway is pyrimidine metabolism; dTMP biosynthesis via salvage pathway; dTMP from thymine: step 1/2. In terms of biological role, the enzymes which catalyze the reversible phosphorolysis of pyrimidine nucleosides are involved in the degradation of these compounds and in their utilization as carbon and energy sources, or in the rescue of pyrimidine bases for nucleotide synthesis. The chain is Thymidine phosphorylase from Salmonella choleraesuis (strain SC-B67).